Consider the following 154-residue polypeptide: Large ribosomal subunit protein uL30 (154 aa).

This sequence belongs to the universal ribosomal protein uL30 family. Part of the 50S ribosomal subunit.

The chain is Large ribosomal subunit protein uL30 from Methanococcus maripaludis (strain DSM 14266 / JCM 13030 / NBRC 101832 / S2 / LL).